Here is a 1300-residue protein sequence, read N- to C-terminus: Sal-like protein 3 (1300 aa).

A compositionally biased stretch (basic residues) spans 1 to 11 (MSRRKQAKPQH). Disordered stretches follow at residues 1–51 (MSRR…EETS), 84–162 (EDAP…YGAP), 234–258 (QRPP…PSQL), and 277–352 (GSGP…GSLL). The C2H2-type 1; atypical zinc-finger motif lies at 51–73 (SVCEKCCAEFFKWADFLEHQRSC). The span at 87-100 (PAPPPEDFPEPSPA) shows a compositional bias: pro residues. The residue at position 109 (serine 109) is a Phosphoserine. Basic and acidic residues predominate over residues 122–132 (GEARPVEKEAE). Over residues 145 to 157 (PRPPPAAPAPPTP) the composition is skewed to pro residues. 2 stretches are compositionally biased toward low complexity: residues 277–319 (GSGP…AAPA) and 329–352 (PQSA…GSLL). 2 consecutive C2H2-type zinc fingers follow at residues 420 to 442 (HKCR…LRSH) and 448 to 470 (FKCN…FQRH). A disordered region spans residues 523 to 633 (PTSVGLQLPP…VDGAPTSLGS (111 aa)). A compositionally biased stretch (low complexity) spans 543 to 561 (SPSATPASRSPQRPSPASS). The span at 577 to 586 (VSATAESPQS) shows a compositional bias: polar residues. 3 consecutive C2H2-type zinc fingers follow at residues 679–701 (NQCV…YRTH), 707–729 (FKCK…FGVH), and 739–761 (HSCP…IRMH). Residues 864–955 (SVENGSGESD…GSGGAPGRAG (92 aa)) are disordered. Over residues 889–910 (RSAGSPALSESSSSQALSPAPS) the composition is skewed to low complexity. Serine 919 carries the phosphoserine modification. C2H2-type zinc fingers lie at residues 977-999 (TVCG…YRSH), 1005-1027 (FVCA…LLTH), 1113-1135 (HNCQ…ERTH), and 1141-1163 (FGCT…MGTH). Serine 1177 is subject to Phosphoserine. The tract at residues 1259–1279 (GMDKARTGSSPPIVSLDKASS) is disordered.

The protein belongs to the sal C2H2-type zinc-finger protein family. In terms of tissue distribution, widely expressed in adult with highest levels in heart. Expressed in fetal brain (in neurons of hippocampus, cortex, mediodorsal and ventrolateral thalamic nuclei, putamen, cerebellum and brainstem).

The protein resides in the nucleus. Its function is as follows. Probable transcription factor. The protein is Sal-like protein 3 (SALL3) of Homo sapiens (Human).